The chain runs to 478 residues: MEKHLRLAPSPTGLLHIGTARTALFNWLYARKINGKFLIRIEDTDIVRSKSEYTTNILNGLNWLGLNWDEEPINQSKRVSVHKNYIKRLLESGAAYRCFTSESEILDLREKQKKSGLPPKHDNRHRNLTRKEIKEFISQGKSSVIRFKIDEETEIKWEDQIRGEIKWQGKDLGGDLVLSRRALGDEIGNPLYNLAVVVDDNFMNITHVVRGEDHISNTAKQILIYKALNFKLPIFAHTPLILNSEGKKLSKRDSVTSIDEFKEMGYLPEALANYMAFLGWSIKSPESEILSLSEISKVFNLSDVNKAGAKFNWEKLNWINSQYIKKMELTQLCKFIKKYWEEMGWESPSSEWDLKLTNLIQDSMILLKDAIDQSKPFFILSQMKKEGEEFLESKKEVKESLKYILFYLKEANITKVNKDNAREIINKIIVNHSIKKGILMKSLRVAFFGCLSGPDLIQSWELFSENKIDIPLIERCFN.

The short motif at 9–19 (PSPTGLLHIGT) is the 'HIGH' region element. Positions 248–252 (KLSKR) match the 'KMSKS' region motif. Residue lysine 251 coordinates ATP.

This sequence belongs to the class-I aminoacyl-tRNA synthetase family. Glutamate--tRNA ligase type 1 subfamily. Monomer.

It is found in the cytoplasm. It carries out the reaction tRNA(Glu) + L-glutamate + ATP = L-glutamyl-tRNA(Glu) + AMP + diphosphate. In terms of biological role, catalyzes the attachment of glutamate to tRNA(Glu) in a two-step reaction: glutamate is first activated by ATP to form Glu-AMP and then transferred to the acceptor end of tRNA(Glu). The chain is Glutamate--tRNA ligase from Prochlorococcus marinus subsp. pastoris (strain CCMP1986 / NIES-2087 / MED4).